The chain runs to 338 residues: Probable beta-1,4-xylosyltransferase IRX9 (338 aa).

Residues 1–21 are disordered; that stretch reads MASAGGCKKKTGNSRSRSPRS. Residues 1 to 27 lie on the Cytoplasmic side of the membrane; it reads MASAGGCKKKTGNSRSRSPRSPVVLRR. Residues 28-46 form a helical; Signal-anchor for type II membrane protein membrane-spanning segment; it reads AMLHSSLCFLVGLLAGLAA. Residues 47–338 are Lumenal-facing; it reads PSDWPAAAGA…IMLWRIQTTL (292 aa). N-linked (GlcNAc...) asparagine glycosylation is found at Asn232 and Asn314.

This sequence belongs to the glycosyltransferase 43 family.

It is found in the golgi apparatus membrane. In terms of biological role, probable beta-1,4-xylosyltransferase involved in xylan biosynthesis in cell walls. This Oryza sativa subsp. japonica (Rice) protein is Probable beta-1,4-xylosyltransferase IRX9.